A 407-amino-acid chain; its full sequence is Cation efflux system protein CusB (407 aa).

Positions 1 to 26 (MKKIALIIGSMIAGGIISAAGFTWFA) are cleaved as a signal peptide.

Belongs to the membrane fusion protein (MFP) (TC 8.A.1) family. The cus efflux system is composed of CusA, CusB, CusC and CusF.

Its function is as follows. Part of a cation efflux system that mediates resistance to copper and silver. This is Cation efflux system protein CusB (cusB) from Escherichia coli O6:H1 (strain CFT073 / ATCC 700928 / UPEC).